The chain runs to 446 residues: Sphingomyelinase phosphodiesterase C (446 aa).

Positions 1 to 26 (MKFRNNLTLYLIFIIVFTIYISLTIS) are cleaved as a signal peptide. An N-linked (GlcNAc...) asparagine glycan is attached at asparagine 6. Zn(2+) contacts are provided by aspartate 39 and histidine 41. A disulfide bond links cysteine 56 and cysteine 78. Position 107 (aspartate 107) interacts with Zn(2+). N-linked (GlcNAc...) asparagine glycans are attached at residues asparagine 118 and asparagine 128. Zn(2+) is bound at residue asparagine 148. Asparagine 178, asparagine 217, asparagine 229, and asparagine 234 each carry an N-linked (GlcNAc...) asparagine glycan. Positions 247, 287, and 289 each coordinate Zn(2+). 2 N-linked (GlcNAc...) asparagine glycosylation sites follow: asparagine 342 and asparagine 357. Cysteine 429 and cysteine 442 are oxidised to a cystine.

It belongs to the acid sphingomyelinase family. Zn(2+) is required as a cofactor.

The protein localises to the secreted. This is Sphingomyelinase phosphodiesterase C (sgmC) from Dictyostelium discoideum (Social amoeba).